A 393-amino-acid polypeptide reads, in one-letter code: tRNA(Met) cytidine acetate ligase (393 aa).

3 residues coordinate ATP: Gly81, Asn142, and Arg167.

It belongs to the TmcAL family.

The protein localises to the cytoplasm. It catalyses the reaction cytidine(34) in elongator tRNA(Met) + acetate + ATP = N(4)-acetylcytidine(34) in elongator tRNA(Met) + AMP + diphosphate. Its function is as follows. Catalyzes the formation of N(4)-acetylcytidine (ac(4)C) at the wobble position of elongator tRNA(Met), using acetate and ATP as substrates. First activates an acetate ion to form acetyladenylate (Ac-AMP) and then transfers the acetyl group to tRNA to form ac(4)C34. This chain is tRNA(Met) cytidine acetate ligase, found in Bacillus cereus (strain AH187).